A 220-amino-acid polypeptide reads, in one-letter code: Dual specificity phosphatase 29 (220 aa).

The 149-residue stretch at 54–202 (HVNEVWPKLY…LRELDKQLVQ (149 aa)) folds into the Tyrosine-protein phosphatase domain. Position 146–153 (146–153 (HCVMGRSR)) interacts with substrate. Residue cysteine 147 is the Phosphocysteine intermediate of the active site.

The protein belongs to the protein-tyrosine phosphatase family. Non-receptor class dual specificity subfamily. Homodimer. Interacts with PRKAA2.

The protein localises to the cytoplasm. The protein resides in the nucleus. It catalyses the reaction O-phospho-L-tyrosyl-[protein] + H2O = L-tyrosyl-[protein] + phosphate. It carries out the reaction O-phospho-L-seryl-[protein] + H2O = L-seryl-[protein] + phosphate. The enzyme catalyses O-phospho-L-threonyl-[protein] + H2O = L-threonyl-[protein] + phosphate. Dual specificity phosphatase able to dephosphorylate phosphotyrosine, phosphoserine and phosphothreonine residues within the same substrate, with a preference for phosphotyrosine as a substrate. Involved in the modulation of intracellular signaling cascades. In skeletal muscle regulates systemic glucose homeostasis by activating, AMPK, an energy sensor protein kinase. Affects MAP kinase signaling though modulation of the ERK1/2 cascade in skeletal muscle promoting muscle cell differentiation, development and atrophy. In Pan troglodytes (Chimpanzee), this protein is Dual specificity phosphatase 29 (DUSP29).